A 282-amino-acid chain; its full sequence is NADPH-dependent 7-cyano-7-deazaguanine reductase (282 aa).

88 to 90 is a substrate binding site; it reads IES. Residue 90–91 participates in NADPH binding; sequence SK. The active-site Thioimide intermediate is the cysteine 190. Aspartate 197 serves as the catalytic Proton donor. 229–230 is a substrate binding site; the sequence is HE. Residue 258–259 coordinates NADPH; it reads RG.

It belongs to the GTP cyclohydrolase I family. QueF type 2 subfamily. In terms of assembly, homodimer.

The protein resides in the cytoplasm. The catalysed reaction is 7-aminomethyl-7-carbaguanine + 2 NADP(+) = 7-cyano-7-deazaguanine + 2 NADPH + 3 H(+). Its pathway is tRNA modification; tRNA-queuosine biosynthesis. Catalyzes the NADPH-dependent reduction of 7-cyano-7-deazaguanine (preQ0) to 7-aminomethyl-7-deazaguanine (preQ1). The protein is NADPH-dependent 7-cyano-7-deazaguanine reductase of Escherichia coli (strain SMS-3-5 / SECEC).